Consider the following 183-residue polypeptide: Adenine phosphoribosyltransferase (183 aa).

The protein belongs to the purine/pyrimidine phosphoribosyltransferase family. Homodimer.

The protein resides in the cytoplasm. The catalysed reaction is AMP + diphosphate = 5-phospho-alpha-D-ribose 1-diphosphate + adenine. It participates in purine metabolism; AMP biosynthesis via salvage pathway; AMP from adenine: step 1/1. Its function is as follows. Catalyzes a salvage reaction resulting in the formation of AMP, that is energically less costly than de novo synthesis. This is Adenine phosphoribosyltransferase from Shewanella halifaxensis (strain HAW-EB4).